Reading from the N-terminus, the 367-residue chain is UDP-N-acetylglucosamine--N-acetylmuramyl-(pentapeptide) pyrophosphoryl-undecaprenol N-acetylglucosamine transferase (367 aa).

UDP-N-acetyl-alpha-D-glucosamine is bound by residues 15–17 (TGG), Asn-127, Arg-163, Ser-191, Ile-249, and Gln-294.

It belongs to the glycosyltransferase 28 family. MurG subfamily.

It localises to the cell inner membrane. It carries out the reaction di-trans,octa-cis-undecaprenyl diphospho-N-acetyl-alpha-D-muramoyl-L-alanyl-D-glutamyl-meso-2,6-diaminopimeloyl-D-alanyl-D-alanine + UDP-N-acetyl-alpha-D-glucosamine = di-trans,octa-cis-undecaprenyl diphospho-[N-acetyl-alpha-D-glucosaminyl-(1-&gt;4)]-N-acetyl-alpha-D-muramoyl-L-alanyl-D-glutamyl-meso-2,6-diaminopimeloyl-D-alanyl-D-alanine + UDP + H(+). The protein operates within cell wall biogenesis; peptidoglycan biosynthesis. In terms of biological role, cell wall formation. Catalyzes the transfer of a GlcNAc subunit on undecaprenyl-pyrophosphoryl-MurNAc-pentapeptide (lipid intermediate I) to form undecaprenyl-pyrophosphoryl-MurNAc-(pentapeptide)GlcNAc (lipid intermediate II). This Burkholderia orbicola (strain MC0-3) protein is UDP-N-acetylglucosamine--N-acetylmuramyl-(pentapeptide) pyrophosphoryl-undecaprenol N-acetylglucosamine transferase.